A 67-amino-acid polypeptide reads, in one-letter code: MVTIERLLPYSYWIGHPVTNRAIIYPFVGFIPLSLKEVKTLQFIVKLNTAKWELKYQRKRLGHMRPG.

The segment at 13-18 is important for viral replication in intestinal cells; it reads WIGHPV. The segment at 22–38 is a transmembrane helix; that stretch reads AIIYPFVGFIPLSLKEV.

The protein resides in the host cytoplasmic vesicle membrane. In terms of biological role, facilitates virus release from intestinal cells in vitro, possibly through the host autophagic pathway. This Homo sapiens (Human) protein is ORF2p protein.